A 244-amino-acid polypeptide reads, in one-letter code: Putative ABC transporter ATP-binding protein gll0289 (244 aa).

An ABC transporter domain is found at 5 to 237; the sequence is LVVEELHYSY…RVLLETHGLE (233 aa). 38 to 45 is a binding site for ATP; that stretch reads GPNGSGKS.

Belongs to the ABC transporter superfamily.

It localises to the cell inner membrane. Probably part of an ABC transporter complex. Responsible for energy coupling to the transport system. The chain is Putative ABC transporter ATP-binding protein gll0289 from Gloeobacter violaceus (strain ATCC 29082 / PCC 7421).